Consider the following 330-residue polypeptide: 4-hydroxythreonine-4-phosphate dehydrogenase (330 aa).

The substrate site is built by histidine 134 and threonine 135. Residues histidine 164, histidine 209, and histidine 264 each contribute to the a divalent metal cation site. Residues lysine 272, asparagine 281, and arginine 290 each coordinate substrate.

It belongs to the PdxA family. As to quaternary structure, homodimer. Requires Zn(2+) as cofactor. The cofactor is Mg(2+). Co(2+) serves as cofactor.

Its subcellular location is the cytoplasm. The enzyme catalyses 4-(phosphooxy)-L-threonine + NAD(+) = 3-amino-2-oxopropyl phosphate + CO2 + NADH. The protein operates within cofactor biosynthesis; pyridoxine 5'-phosphate biosynthesis; pyridoxine 5'-phosphate from D-erythrose 4-phosphate: step 4/5. In terms of biological role, catalyzes the NAD(P)-dependent oxidation of 4-(phosphooxy)-L-threonine (HTP) into 2-amino-3-oxo-4-(phosphooxy)butyric acid which spontaneously decarboxylates to form 3-amino-2-oxopropyl phosphate (AHAP). The chain is 4-hydroxythreonine-4-phosphate dehydrogenase from Pseudoalteromonas translucida (strain TAC 125).